Reading from the N-terminus, the 71-residue chain is NAD(P)H-quinone oxidoreductase subunit O (71 aa).

The protein belongs to the complex I NdhO subunit family. In terms of assembly, NDH-1 can be composed of about 15 different subunits; different subcomplexes with different compositions have been identified which probably have different functions.

Its subcellular location is the cellular thylakoid membrane. It carries out the reaction a plastoquinone + NADH + (n+1) H(+)(in) = a plastoquinol + NAD(+) + n H(+)(out). The catalysed reaction is a plastoquinone + NADPH + (n+1) H(+)(in) = a plastoquinol + NADP(+) + n H(+)(out). Its function is as follows. NDH-1 shuttles electrons from an unknown electron donor, via FMN and iron-sulfur (Fe-S) centers, to quinones in the respiratory and/or the photosynthetic chain. The immediate electron acceptor for the enzyme in this species is believed to be plastoquinone. Couples the redox reaction to proton translocation, and thus conserves the redox energy in a proton gradient. Cyanobacterial NDH-1 also plays a role in inorganic carbon-concentration. In Picosynechococcus sp. (strain ATCC 27264 / PCC 7002 / PR-6) (Agmenellum quadruplicatum), this protein is NAD(P)H-quinone oxidoreductase subunit O.